The chain runs to 135 residues: Large ribosomal subunit protein uL16c (135 aa).

This sequence belongs to the universal ribosomal protein uL16 family. As to quaternary structure, part of the 50S ribosomal subunit.

It localises to the plastid. Its subcellular location is the chloroplast. This Aethionema cordifolium (Lebanon stonecress) protein is Large ribosomal subunit protein uL16c.